The following is a 490-amino-acid chain: Hippocampus abundant transcript 1 protein (490 aa).

Residue Met1 is modified to N-acetylmethionine. Residues Met1–Ala40 are Extracellular-facing. Asn12 carries N-linked (GlcNAc...) asparagine glycosylation. A helical transmembrane segment spans residues Val41–Val61. The Cytoplasmic portion of the chain corresponds to Leu62–Asn74. The chain crosses the membrane as a helical span at residues Gly75 to Leu95. Residues Ser96 to Ser103 are Extracellular-facing. Residues Phe104–Trp124 traverse the membrane as a helical segment. Over Trp125–Tyr126 the chain is Cytoplasmic. Residues Phe127 to Val147 form a helical membrane-spanning segment. Over Ala148–Tyr160 the chain is Extracellular. Residues Gly161–Leu181 traverse the membrane as a helical segment. The Cytoplasmic segment spans residues Gly182 to Ser188. Residues Leu189–Val209 traverse the membrane as a helical segment. Topologically, residues Pro210–Asp243 are extracellular. Residues Ser244–Tyr264 traverse the membrane as a helical segment. Topologically, residues Ser265 to Ala284 are cytoplasmic. A helical membrane pass occupies residues Phe285–Met305. Residues Arg306 to Thr313 are Extracellular-facing. The chain crosses the membrane as a helical span at residues Ile314 to Pro334. Over Trp335 to Met337 the chain is Cytoplasmic. The helical transmembrane segment at Trp338 to Val358 threads the bilayer. At Ser359 to Gly379 the chain is on the extracellular side. The helical transmembrane segment at Leu380–Leu400 threads the bilayer. Topologically, residues Lys401–Pro427 are cytoplasmic. The chain crosses the membrane as a helical span at residues Gly428–Ile448. Residues Pro449 to Val490 are Extracellular-facing. A glycan (N-linked (GlcNAc...) asparagine) is linked at Asn453. The segment at Cys465–Val490 is disordered.

It belongs to the major facilitator superfamily.

Its subcellular location is the membrane. This is Hippocampus abundant transcript 1 protein from Homo sapiens (Human).